A 169-amino-acid chain; its full sequence is Inorganic pyrophosphatase (169 aa).

Residues K20, R34, and Y46 each contribute to the substrate site. Residues D56, D61, and D93 each coordinate Mg(2+). Residue Y130 coordinates substrate.

The protein belongs to the PPase family. Homohexamer. Mg(2+) is required as a cofactor.

It is found in the cytoplasm. The catalysed reaction is diphosphate + H2O = 2 phosphate + H(+). In terms of biological role, catalyzes the hydrolysis of inorganic pyrophosphate (PPi) forming two phosphate ions. This is Inorganic pyrophosphatase from Methanosarcina mazei (strain ATCC BAA-159 / DSM 3647 / Goe1 / Go1 / JCM 11833 / OCM 88) (Methanosarcina frisia).